The following is a 121-amino-acid chain: Large ribosomal subunit protein uL24 (121 aa).

The disordered stretch occupies residues 1–23; that stretch reads MVRIESSQPRKQRKARYDAPSHM.

Belongs to the universal ribosomal protein uL24 family. Part of the 50S ribosomal subunit.

In terms of biological role, one of two assembly initiator proteins, it binds directly to the 5'-end of the 23S rRNA, where it nucleates assembly of the 50S subunit. Located at the polypeptide exit tunnel on the outside of the subunit. The protein is Large ribosomal subunit protein uL24 of Methanoregula boonei (strain DSM 21154 / JCM 14090 / 6A8).